Here is a 125-residue protein sequence, read N- to C-terminus: Small ribosomal subunit protein uS12 (125 aa).

Positions 1–31 (MPTINQLVRHGRQTEVTKSKSPAMQGGPQRR) are disordered. Residue D89 is modified to 3-methylthioaspartic acid. The segment at 105-125 (QGVKDRKQSRSKYGAKRPKKA) is disordered. The segment covering 113-125 (SRSKYGAKRPKKA) has biased composition (basic residues).

The protein belongs to the universal ribosomal protein uS12 family. Part of the 30S ribosomal subunit. Contacts proteins S8 and S17. May interact with IF1 in the 30S initiation complex.

With S4 and S5 plays an important role in translational accuracy. In terms of biological role, interacts with and stabilizes bases of the 16S rRNA that are involved in tRNA selection in the A site and with the mRNA backbone. Located at the interface of the 30S and 50S subunits, it traverses the body of the 30S subunit contacting proteins on the other side and probably holding the rRNA structure together. The combined cluster of proteins S8, S12 and S17 appears to hold together the shoulder and platform of the 30S subunit. In Methylibium petroleiphilum (strain ATCC BAA-1232 / LMG 22953 / PM1), this protein is Small ribosomal subunit protein uS12.